A 338-amino-acid polypeptide reads, in one-letter code: Ketol-acid reductoisomerase (NADP(+)) (338 aa).

The region spanning threonine 2–threonine 182 is the KARI N-terminal Rossmann domain. NADP(+) contacts are provided by residues tyrosine 25–glutamine 28, serine 51, serine 53, and aspartate 83–glutamine 86. The active site involves histidine 108. Glycine 134 contributes to the NADP(+) binding site. The KARI C-terminal knotted domain maps to threonine 183–asparagine 330. Mg(2+) contacts are provided by aspartate 191, glutamate 195, glutamate 227, and glutamate 231. Residue serine 252 participates in substrate binding.

The protein belongs to the ketol-acid reductoisomerase family. Mg(2+) is required as a cofactor.

The enzyme catalyses (2R)-2,3-dihydroxy-3-methylbutanoate + NADP(+) = (2S)-2-acetolactate + NADPH + H(+). It carries out the reaction (2R,3R)-2,3-dihydroxy-3-methylpentanoate + NADP(+) = (S)-2-ethyl-2-hydroxy-3-oxobutanoate + NADPH + H(+). It functions in the pathway amino-acid biosynthesis; L-isoleucine biosynthesis; L-isoleucine from 2-oxobutanoate: step 2/4. It participates in amino-acid biosynthesis; L-valine biosynthesis; L-valine from pyruvate: step 2/4. Its function is as follows. Involved in the biosynthesis of branched-chain amino acids (BCAA). Catalyzes an alkyl-migration followed by a ketol-acid reduction of (S)-2-acetolactate (S2AL) to yield (R)-2,3-dihydroxy-isovalerate. In the isomerase reaction, S2AL is rearranged via a Mg-dependent methyl migration to produce 3-hydroxy-3-methyl-2-ketobutyrate (HMKB). In the reductase reaction, this 2-ketoacid undergoes a metal-dependent reduction by NADPH to yield (R)-2,3-dihydroxy-isovalerate. The sequence is that of Ketol-acid reductoisomerase (NADP(+)) from Clostridium botulinum (strain Alaska E43 / Type E3).